Reading from the N-terminus, the 138-residue chain is Large ribosomal subunit protein uL16 (138 aa).

The span at 1-16 (MLIPRRVKHRKQHHPG) shows a compositional bias: basic residues. Residues 1-25 (MLIPRRVKHRKQHHPGRSGQATGGT) are disordered.

It belongs to the universal ribosomal protein uL16 family. As to quaternary structure, part of the 50S ribosomal subunit.

Its function is as follows. Binds 23S rRNA and is also seen to make contacts with the A and possibly P site tRNAs. This is Large ribosomal subunit protein uL16 from Renibacterium salmoninarum (strain ATCC 33209 / DSM 20767 / JCM 11484 / NBRC 15589 / NCIMB 2235).